A 444-amino-acid chain; its full sequence is Ubiquitin carboxyl-terminal hydrolase MINDY-3 (444 aa).

Cys-51 (nucleophile) is an active-site residue. Phosphoserine is present on Ser-124. The Proton acceptor role is filled by His-286.

This sequence belongs to the MINDY deubiquitinase family. FAM188 subfamily. In terms of assembly, interacts with COPS5.

It is found in the nucleus. It carries out the reaction Thiol-dependent hydrolysis of ester, thioester, amide, peptide and isopeptide bonds formed by the C-terminal Gly of ubiquitin (a 76-residue protein attached to proteins as an intracellular targeting signal).. Its function is as follows. Hydrolase that can remove 'Lys-48'-linked conjugated ubiquitin from proteins. The sequence is that of Ubiquitin carboxyl-terminal hydrolase MINDY-3 from Mus musculus (Mouse).